Reading from the N-terminus, the 442-residue chain is Tyrosine-protein kinase transforming protein RYK (442 aa).

The Protein kinase domain occupies 45 to 316 (LSLGKVLGEG…QLKVHLEKLL (272 aa)). ATP contacts are provided by residues 51–59 (LGEGEFGSV) and Lys-77. Residue Asp-181 is the Proton acceptor of the active site. Tyr-212 is modified (phosphotyrosine; by autocatalysis).

This sequence belongs to the protein kinase superfamily. Tyr protein kinase family. AXL/UFO subfamily.

The protein resides in the host cell membrane. It catalyses the reaction L-tyrosyl-[protein] + ATP = O-phospho-L-tyrosyl-[protein] + ADP + H(+). In Avian retrovirus RPL30, this protein is Tyrosine-protein kinase transforming protein RYK (V-RYK).